A 314-amino-acid chain; its full sequence is Putative lipoprotein LppW (314 aa).

The first 22 residues, 1–22 (MRARPLTLLTALAAVTLVVVAG), serve as a signal peptide directing secretion. Cysteine 23 is lipidated: N-palmitoyl cysteine. Residue cysteine 23 is the site of S-diacylglycerol cysteine attachment.

The protein localises to the cell membrane. This Mycobacterium bovis (strain ATCC BAA-935 / AF2122/97) protein is Putative lipoprotein LppW (lppW).